Reading from the N-terminus, the 120-residue chain is Fumarate reductase subunit D (120 aa).

3 helical membrane passes run 25–45 (FAMLTPVTILVLGIMVPLGIL), 57–77 (GFVTSFIGALFTIATLALPMW), and 100–120 (IACYATAFLVSALAIIFVFMI).

This sequence belongs to the FrdD family. Part of an enzyme complex containing four subunits: a flavoprotein (FrdA), an iron-sulfur protein (FrdB), and two hydrophobic anchor proteins (FrdC and FrdD).

Its subcellular location is the cell inner membrane. In terms of biological role, anchors the catalytic components of the fumarate reductase complex to the cell membrane, binds quinones. The sequence is that of Fumarate reductase subunit D from Photobacterium profundum (strain SS9).